A 1248-amino-acid polypeptide reads, in one-letter code: ATP-dependent helicase/nuclease subunit A (1248 aa).

Positions 4 to 480 (TKWTKEQYAA…ILLFKNFRSR (477 aa)) constitute a UvrD-like helicase ATP-binding domain. 25–32 (AAAGAGKT) lines the ATP pocket. The UvrD-like helicase C-terminal domain maps to 523–820 (ETVVGGAIEL…RLMSIHKSKG (298 aa)).

This sequence belongs to the helicase family. AddA subfamily. In terms of assembly, heterodimer of AddA and AddB/RexB. Mg(2+) serves as cofactor.

The catalysed reaction is Couples ATP hydrolysis with the unwinding of duplex DNA by translocating in the 3'-5' direction.. It catalyses the reaction ATP + H2O = ADP + phosphate + H(+). Functionally, the heterodimer acts as both an ATP-dependent DNA helicase and an ATP-dependent, dual-direction single-stranded exonuclease. Recognizes the chi site generating a DNA molecule suitable for the initiation of homologous recombination. The AddA nuclease domain is required for chi fragment generation; this subunit has the helicase and 3' -&gt; 5' nuclease activities. The protein is ATP-dependent helicase/nuclease subunit A of Ruminiclostridium cellulolyticum (strain ATCC 35319 / DSM 5812 / JCM 6584 / H10) (Clostridium cellulolyticum).